The sequence spans 150 residues: Protein Smg homolog (150 aa).

Belongs to the Smg family.

The protein is Protein Smg homolog of Methylibium petroleiphilum (strain ATCC BAA-1232 / LMG 22953 / PM1).